The sequence spans 363 residues: Anthranilate phosphoribosyltransferase (363 aa).

Residues Gly-85, 88 to 89 (GD), Thr-93, 95 to 98 (NVST), 113 to 121 (KHGNRALSS), and Ala-125 contribute to the 5-phospho-alpha-D-ribose 1-diphosphate site. Anthranilate is bound at residue Gly-85. Ser-97 contacts Mg(2+). Asn-116 is a binding site for anthranilate. Arg-171 lines the anthranilate pocket. Mg(2+)-binding residues include Asp-233 and Glu-234.

This sequence belongs to the anthranilate phosphoribosyltransferase family. In terms of assembly, homodimer. Mg(2+) is required as a cofactor.

The catalysed reaction is N-(5-phospho-beta-D-ribosyl)anthranilate + diphosphate = 5-phospho-alpha-D-ribose 1-diphosphate + anthranilate. The protein operates within amino-acid biosynthesis; L-tryptophan biosynthesis; L-tryptophan from chorismate: step 2/5. In terms of biological role, catalyzes the transfer of the phosphoribosyl group of 5-phosphorylribose-1-pyrophosphate (PRPP) to anthranilate to yield N-(5'-phosphoribosyl)-anthranilate (PRA). The polypeptide is Anthranilate phosphoribosyltransferase (Gluconobacter oxydans (strain 621H) (Gluconobacter suboxydans)).